The primary structure comprises 731 residues: Radial spoke head 10 homolog B (731 aa).

The segment at 1-69 (MARGDNMKSS…PNENQPIGEH (69 aa)) is disordered. Polar residues predominate over residues 7–17 (MKSSNKSTPEP). Composition is skewed to low complexity over residues 18 to 36 (TLSK…SESV) and 46 to 57 (SSSAVCSASTVS). 10 MORN repeats span residues 86 to 108 (YEGE…GGHV), 109 to 131 (YKGS…DGLK), 132 to 154 (YQGD…NGST), 155 to 177 (YEGE…KTLT), 179 to 201 (YRGQ…QEAT), 204 to 226 (YKGE…SGNV), 227 to 249 (YEGQ…DLDQ), 251 to 273 (YSGQ…RKRA), 284 to 306 (YTGD…SGAL), and 307 to 329 (YCGQ…NGRV). Disordered regions lie at residues 353–377 (TTPF…SPLG) and 709–731 (KQEQ…TSIH). Residues 363–377 (SKGASQSSSNASPLG) are compositionally biased toward low complexity. Positions 722 to 731 (VTTTSVTSIH) are enriched in polar residues.

The protein localises to the cytoplasm. It is found in the cytoskeleton. It localises to the cilium axoneme. Its subcellular location is the cell projection. The protein resides in the cilium. The protein localises to the flagellum. May function as part of axonemal radial spoke complexes. Radial spoke complexes are important for ciliary motility. The chain is Radial spoke head 10 homolog B (rsph10b) from Danio rerio (Zebrafish).